Reading from the N-terminus, the 455-residue chain is Ribulose bisphosphate carboxylase large chain (455 aa).

Lysine 5 carries the post-translational modification N6,N6,N6-trimethyllysine. Residues asparagine 114 and threonine 164 each contribute to the substrate site. Lysine 166 serves as the catalytic Proton acceptor. Lysine 168 contacts substrate. The Mg(2+) site is built by lysine 192, aspartate 194, and glutamate 195. Lysine 192 is subject to N6-carboxylysine. Histidine 285 serves as the catalytic Proton acceptor. Arginine 286, histidine 318, and serine 370 together coordinate substrate.

This sequence belongs to the RuBisCO large chain family. Type I subfamily. In terms of assembly, heterohexadecamer of 8 large chains and 8 small chains; disulfide-linked. The disulfide link is formed within the large subunit homodimers. Mg(2+) serves as cofactor. Post-translationally, the disulfide bond which can form in the large chain dimeric partners within the hexadecamer appears to be associated with oxidative stress and protein turnover.

Its subcellular location is the plastid. It is found in the chloroplast. The enzyme catalyses 2 (2R)-3-phosphoglycerate + 2 H(+) = D-ribulose 1,5-bisphosphate + CO2 + H2O. It catalyses the reaction D-ribulose 1,5-bisphosphate + O2 = 2-phosphoglycolate + (2R)-3-phosphoglycerate + 2 H(+). Functionally, ruBisCO catalyzes two reactions: the carboxylation of D-ribulose 1,5-bisphosphate, the primary event in carbon dioxide fixation, as well as the oxidative fragmentation of the pentose substrate in the photorespiration process. Both reactions occur simultaneously and in competition at the same active site. The protein is Ribulose bisphosphate carboxylase large chain of Lupinus digitatus (Lupine).